A 265-amino-acid chain; its full sequence is Chlorophyll a-b binding protein 1A, chloroplastic (265 aa).

The transit peptide at 1–34 directs the protein to the chloroplast; it reads MAAAAMALSSPSFAGQAVKLSPSASENSGNGRIT. Residues 151 to 171 form a helical membrane-spanning segment; that stretch reads LVHAQSILAIWACQVVLMGAV. Positions 152, 156, 164, 172, 175, and 181 each coordinate chlorophyll b. Positions 212, 213, 216, 218, 230, 245, and 254 each coordinate chlorophyll a. Residues 219–239 traverse the membrane as a helical segment; that stretch reads LAMFSMFGFFVQAIVTGKGPL. A chlorophyll b-binding site is contributed by phenylalanine 261.

Belongs to the light-harvesting chlorophyll a/b-binding (LHC) protein family. As to quaternary structure, the LHC complex consists of chlorophyll a-b binding proteins. The cofactor is Binds at least 14 chlorophylls (8 Chl-a and 6 Chl-b) and carotenoids such as lutein and neoxanthin.. In terms of processing, photoregulated by reversible phosphorylation of its threonine residues.

Its subcellular location is the plastid. The protein localises to the chloroplast thylakoid membrane. In terms of biological role, the light-harvesting complex (LHC) functions as a light receptor, it captures and delivers excitation energy to photosystems with which it is closely associated. The polypeptide is Chlorophyll a-b binding protein 1A, chloroplastic (CAB1A) (Solanum lycopersicum (Tomato)).